Reading from the N-terminus, the 249-residue chain is Vitamin B12 import ATP-binding protein BtuD (249 aa).

The ABC transporter domain maps to 1 to 233 (MSIVMQLQDV…PNLAQAYGMN (233 aa)). Residue 33-40 (GPNGAGKS) coordinates ATP.

This sequence belongs to the ABC transporter superfamily. Vitamin B12 importer (TC 3.A.1.13.1) family. As to quaternary structure, the complex is composed of two ATP-binding proteins (BtuD), two transmembrane proteins (BtuC) and a solute-binding protein (BtuF).

It is found in the cell inner membrane. The catalysed reaction is an R-cob(III)alamin(out) + ATP + H2O = an R-cob(III)alamin(in) + ADP + phosphate + H(+). In terms of biological role, part of the ABC transporter complex BtuCDF involved in vitamin B12 import. Responsible for energy coupling to the transport system. The chain is Vitamin B12 import ATP-binding protein BtuD from Escherichia coli (strain K12 / DH10B).